Here is a 282-residue protein sequence, read N- to C-terminus: Putative phosphite transport system permease protein HtxC (282 aa).

Transmembrane regions (helical) follow at residues 23 to 43 (HFATSVVVLSLLAVAWYVCQI), 81 to 101 (LAMATIGTIFATIIAFPLALM), 130 to 150 (VYALVFVAAVGFGPFSGVLAI), and 239 to 259 (FNKMITVLAVVLLMVSAIDFI). An ABC transmembrane type-1 domain is found at 77–260 (AGETLAMATI…LMVSAIDFIS (184 aa)).

Belongs to the binding-protein-dependent transport system permease family.

It localises to the cell inner membrane. Probably forms part of a binding-protein-dependent hypophosphite transporter. The protein is Putative phosphite transport system permease protein HtxC (htxC) of Stutzerimonas stutzeri (Pseudomonas stutzeri).